Consider the following 500-residue polypeptide: Protein DETOXIFICATION 24 (500 aa).

Residues 1-20 (MSTQEEMEERLLREGSDAEG) are disordered. The next 12 helical transmembrane spans lie at 48 to 67 (SSLF…AFIG), 72 to 92 (LGLA…YGLM), 124 to 144 (IVDM…GPIL), 160 to 180 (IYPW…IQMY), 188 to 208 (AIVG…TWWC), 225 to 245 (VGSW…WCPF), 266 to 286 (ISSG…VLMA), 298 to 318 (AFSI…GFLG), 342 to 362 (VILT…LAFC), 384 to 404 (VILA…GVAV), 411 to 431 (IVAV…GLIL), and 441 to 461 (GLWS…CYII).

It belongs to the multi antimicrobial extrusion (MATE) (TC 2.A.66.1) family.

It is found in the membrane. In Arabidopsis thaliana (Mouse-ear cress), this protein is Protein DETOXIFICATION 24.